The primary structure comprises 706 residues: Protein MAM3 (706 aa).

The Vacuolar segment spans residues 1-16 (MSFLPLRSRSRSGAPH). The chain crosses the membrane as a helical span at residues 17 to 37 (WVYIILYHIFTIPKIYSLPLL). Residues 38-65 (SGSHVLNSRDVADSGHSVGDEASVTTYY) lie on the Cytoplasmic side of the membrane. Residues 57–240 (DEASVTTYYI…MGVERLTKDE (184 aa)) form the CNNM transmembrane domain. Residues 66-86 (IISIILVLLGGVFAGLTLGLM) form a helical membrane-spanning segment. At 87–120 (GQDEVYLKVISTSGSNSEKKLAKRVLDLISRGKH) the chain is on the vacuolar side. The helical transmembrane segment at 121-141 (WVLVTLLLSNVITNETLPIVL) threads the bilayer. Over 142 to 145 (DRCL) the chain is Cytoplasmic. A helical transmembrane segment spans residues 146-166 (GGGWQAVVSSTILIVIFGEII). Residues 167-177 (PQSVCVKYGLQ) are Vacuolar-facing. A helical transmembrane segment spans residues 178–198 (VGAFFCPFVLVLMYLMYPVAY). The Cytoplasmic portion of the chain corresponds to 199-706 (PIATLLDYML…ANGSSSTIKR (508 aa)). CBS domains follow at residues 259 to 320 (MTPI…DCLP) and 321 to 386 (ISHF…IVDE). Disordered regions lie at residues 421-495 (SHKE…ASNP), 515-540 (ITTHTPHSSKEPSPAPHSNDKSLSAE), and 557-597 (LHTQ…ENQN). A compositionally biased stretch (low complexity) spans 433–445 (ESSPLLSPSNSNH). A phosphoserine mark is found at Ser-439 and Ser-447. Positions 472 to 495 (AVLSPTPQVTEHGTIIPSNLASNP) are enriched in polar residues. Ser-527 bears the Phosphoserine mark. Positions 566 to 575 (TQVTTSTKTT) are enriched in low complexity. Over residues 576 to 597 (RNSPDSISIPNSGANHGNENQN) the composition is skewed to polar residues. At Ser-603 the chain carries Phosphoserine. Tyr-604 carries the post-translational modification Phosphotyrosine. Residue Thr-607 is modified to Phosphothreonine. The residue at position 614 (Ser-614) is a Phosphoserine. Residues 626-706 (IGPAKDWDES…ANGSSSTIKR (81 aa)) form a disordered region. The segment covering 630 to 639 (KDWDESKSEY) has biased composition (basic and acidic residues). Positions 658 to 680 (SSSNASLFSSIKNKFKNENANNN) are enriched in low complexity. The span at 681–706 (DRSNFTDSLSRTSNYDANGSSSTIKR) shows a compositional bias: polar residues.

The protein belongs to the ACDP family.

The protein localises to the vacuole membrane. Involved in metal homeostasis and more specially in manganese sensitivity. In Saccharomyces cerevisiae (strain ATCC 204508 / S288c) (Baker's yeast), this protein is Protein MAM3 (MAM3).